The sequence spans 123 residues: MAENRRMKKVNAMLREAIAKVILKDVKHPKISNRWITITRVSLSRDLQSACVYVSIMPHENSQEETLAALKASAGFIAFQASKDLVLKYFPDLNFYVEDIFSPQDHIESLLLKIAEQDKKTNP.

It belongs to the RbfA family. In terms of assembly, monomer. Binds 30S ribosomal subunits, but not 50S ribosomal subunits or 70S ribosomes.

Its subcellular location is the cytoplasm. In terms of biological role, one of several proteins that assist in the late maturation steps of the functional core of the 30S ribosomal subunit. Associates with free 30S ribosomal subunits (but not with 30S subunits that are part of 70S ribosomes or polysomes). Required for efficient processing of 16S rRNA. May interact with the 5'-terminal helix region of 16S rRNA. This is Ribosome-binding factor A from Chlamydia trachomatis serovar L2 (strain ATCC VR-902B / DSM 19102 / 434/Bu).